Reading from the N-terminus, the 294-residue chain is MHPRFQTAFGQLADNLQSALAPILADEHFPAMLTAEQVSTLKRESGLDEDALAFALLPLAAACARTDLSHFNVGAIARGISGTWYFGGNMEFLGATMQQTVHAEQSAIGHAWLRGEKGLAAITVNYTPCGHCRQFMNELNSGLDLRIHLPGRVPHTLRDYLPDAFGPKDLEIKTLLMDEQDHGFALEGDALTQAAIAAANKCHMPYSYSPSGVALECKDGRIFTGSYAENAAFNPTLPPLQGALNLLNLNGYDYPDIQRAILAEKADAPLIQWDATAATLKALGCNNIDRVLLG.

CMP/dCMP-type deaminase domains lie at 48–168 (DEDA…FGPK) and 186–294 (LEGD…VLLG). Position 89-91 (89-91 (NME)) interacts with substrate. His102 is a Zn(2+) binding site. Glu104 (proton donor) is an active-site residue. Zn(2+)-binding residues include Cys129 and Cys132.

This sequence belongs to the cytidine and deoxycytidylate deaminase family. In terms of assembly, homodimer. It depends on Zn(2+) as a cofactor.

It carries out the reaction cytidine + H2O + H(+) = uridine + NH4(+). The enzyme catalyses 2'-deoxycytidine + H2O + H(+) = 2'-deoxyuridine + NH4(+). In terms of biological role, this enzyme scavenges exogenous and endogenous cytidine and 2'-deoxycytidine for UMP synthesis. The sequence is that of Cytidine deaminase from Citrobacter koseri (strain ATCC BAA-895 / CDC 4225-83 / SGSC4696).